We begin with the raw amino-acid sequence, 379 residues long: Carbamoyl phosphate synthase small chain (379 aa).

The CPSase stretch occupies residues methionine 1–glutamate 189. L-glutamine contacts are provided by serine 47, glycine 241, and glycine 243. The 187-residue stretch at histidine 193–alanine 379 folds into the Glutamine amidotransferase type-1 domain. Cysteine 269 functions as the Nucleophile in the catalytic mechanism. The L-glutamine site is built by leucine 270, glutamine 273, asparagine 311, glycine 313, and phenylalanine 314. Residues histidine 353 and glutamate 355 contribute to the active site.

This sequence belongs to the CarA family. As to quaternary structure, composed of two chains; the small (or glutamine) chain promotes the hydrolysis of glutamine to ammonia, which is used by the large (or ammonia) chain to synthesize carbamoyl phosphate. Tetramer of heterodimers (alpha,beta)4.

It catalyses the reaction hydrogencarbonate + L-glutamine + 2 ATP + H2O = carbamoyl phosphate + L-glutamate + 2 ADP + phosphate + 2 H(+). It carries out the reaction L-glutamine + H2O = L-glutamate + NH4(+). Its pathway is amino-acid biosynthesis; L-arginine biosynthesis; carbamoyl phosphate from bicarbonate: step 1/1. It participates in pyrimidine metabolism; UMP biosynthesis via de novo pathway; (S)-dihydroorotate from bicarbonate: step 1/3. Its function is as follows. Small subunit of the glutamine-dependent carbamoyl phosphate synthetase (CPSase). CPSase catalyzes the formation of carbamoyl phosphate from the ammonia moiety of glutamine, carbonate, and phosphate donated by ATP, constituting the first step of 2 biosynthetic pathways, one leading to arginine and/or urea and the other to pyrimidine nucleotides. The small subunit (glutamine amidotransferase) binds and cleaves glutamine to supply the large subunit with the substrate ammonia. The protein is Carbamoyl phosphate synthase small chain of Vibrio vulnificus (strain YJ016).